The following is a 251-amino-acid chain: Probable metal-binding protein YrpE (251 aa).

A signal peptide spans 1 to 30 (MNILFSKRLGILTIGSLLVLAGCQTSGSSA). A compositionally biased stretch (polar residues) spans 25–41 (TSGSSAGESNQTTSSSA). The tract at residues 25 to 72 (TSGSSAGESNQTTSSSAVEEDSSKTQEQTSDSHTHEHSHDHSHAHDEE) is disordered. Positions 54 to 72 (SDSHTHEHSHDHSHAHDEE) are enriched in basic and acidic residues. Zn(2+) contacts are provided by His203, His212, His214, Glu247, and His251.

This sequence belongs to the calycin superfamily. ZinT family.

This Bacillus subtilis (strain 168) protein is Probable metal-binding protein YrpE (yrpE).